We begin with the raw amino-acid sequence, 156 residues long: MYQAINPCPQSWYGSPQLEREIVCKMSGAPHYPNYYPVHPNALGGAWFDTSLNARSLTTTPSLTTCTPPSLAACTPPTSLGMVDSPPHINPPRRIGTLCFDFGSAKSPQRCECVASDRPSTTSNTAPDTYRLLITNSKTRKNNYGTCRLEPLTYGI.

This is an uncharacterized protein from Aedes vexans (Inland floodwater mosquito).